A 363-amino-acid polypeptide reads, in one-letter code: Lipoyl synthase (363 aa).

Positions 55, 60, 66, 81, 85, 88, and 292 each coordinate [4Fe-4S] cluster. Residues 67-281 (WESREATFLI…SKLAKELGFG (215 aa)) enclose the Radical SAM core domain. Positions 338 to 363 (PSEETPVTTRMAKTPAQSNSVAATIR) are disordered. Over residues 352–363 (PAQSNSVAATIR) the composition is skewed to polar residues.

Belongs to the radical SAM superfamily. Lipoyl synthase family. [4Fe-4S] cluster serves as cofactor.

It localises to the cytoplasm. The catalysed reaction is [[Fe-S] cluster scaffold protein carrying a second [4Fe-4S](2+) cluster] + N(6)-octanoyl-L-lysyl-[protein] + 2 oxidized [2Fe-2S]-[ferredoxin] + 2 S-adenosyl-L-methionine + 4 H(+) = [[Fe-S] cluster scaffold protein] + N(6)-[(R)-dihydrolipoyl]-L-lysyl-[protein] + 4 Fe(3+) + 2 hydrogen sulfide + 2 5'-deoxyadenosine + 2 L-methionine + 2 reduced [2Fe-2S]-[ferredoxin]. The protein operates within protein modification; protein lipoylation via endogenous pathway; protein N(6)-(lipoyl)lysine from octanoyl-[acyl-carrier-protein]: step 2/2. Functionally, catalyzes the radical-mediated insertion of two sulfur atoms into the C-6 and C-8 positions of the octanoyl moiety bound to the lipoyl domains of lipoate-dependent enzymes, thereby converting the octanoylated domains into lipoylated derivatives. This is Lipoyl synthase from Corynebacterium aurimucosum (strain ATCC 700975 / DSM 44827 / CIP 107346 / CN-1) (Corynebacterium nigricans).